Here is a 118-residue protein sequence, read N- to C-terminus: Phage-like element PBSX protein XkdH (118 aa).

This sequence to B.subtilis YqbH.

The polypeptide is Phage-like element PBSX protein XkdH (xkdH) (Bacillus subtilis (strain 168)).